The chain runs to 152 residues: Cell division protein SepF (152 aa).

The protein belongs to the SepF family. In terms of assembly, homodimer. Interacts with FtsZ.

The protein resides in the cytoplasm. Cell division protein that is part of the divisome complex and is recruited early to the Z-ring. Probably stimulates Z-ring formation, perhaps through the cross-linking of FtsZ protofilaments. Its function overlaps with FtsA. The protein is Cell division protein SepF of Listeria monocytogenes serotype 4b (strain CLIP80459).